The following is a 145-amino-acid chain: Transcriptional regulator SlyA (145 aa).

The region spanning 2–135 is the HTH marR-type domain; sequence ELPLGSDLAR…LALLVARLEK (134 aa). The segment at residues 49 to 72 is a DNA-binding region (H-T-H motif); it reads QIQLAKAIGIEQPSLVRTLDQLEE.

The protein belongs to the SlyA family. In terms of assembly, homodimer.

Functionally, transcription regulator that can specifically activate or repress expression of target genes. This Pectobacterium atrosepticum (strain SCRI 1043 / ATCC BAA-672) (Erwinia carotovora subsp. atroseptica) protein is Transcriptional regulator SlyA.